The primary structure comprises 62 residues: Phospholipase A2 superbin a (62 aa).

Tyrosine 28, glycine 30, and glycine 32 together coordinate Ca(2+). Cysteines 29 and 45 form a disulfide. Histidine 48 is an active-site residue. Position 49 (aspartate 49) interacts with Ca(2+).

The cofactor is Ca(2+). Expressed by the venom gland.

The protein localises to the secreted. The catalysed reaction is a 1,2-diacyl-sn-glycero-3-phosphocholine + H2O = a 1-acyl-sn-glycero-3-phosphocholine + a fatty acid + H(+). Snake venom phospholipase A2 (PLA2) that inhibits collagen-induced platelet aggregation. In terms of inhibition of platelet aggregation, superbin a is more potent as superbin b, c, and d. PLA2 catalyzes the calcium-dependent hydrolysis of the 2-acyl groups in 3-sn-phosphoglycerides. This chain is Phospholipase A2 superbin a, found in Austrelaps superbus (Lowland copperhead snake).